Consider the following 408-residue polypeptide: Ribonuclease T2-like (408 aa).

A signal peptide spans 1-25; that stretch reads MLQSIPGPQHILKALTGSLGLSTIF. Intrachain disulfides connect cysteine 38/cysteine 56, cysteine 45/cysteine 92, cysteine 55/cysteine 158, and cysteine 100/cysteine 150. Histidine 85 is an active-site residue. Asparagine 108 carries N-linked (GlcNAc...) asparagine glycosylation. Catalysis depends on residues glutamate 143 and histidine 147. An N-linked (GlcNAc...) asparagine glycan is attached at asparagine 173. Cysteine 222 and cysteine 257 are oxidised to a cystine. Positions 268 to 292 are disordered; the sequence is KHREPSRTTDTPSQPTTTGTPFKGR. Residues 275 to 288 show a composition bias toward low complexity; sequence TTDTPSQPTTTGTP. Asparagine 372 carries N-linked (GlcNAc...) asparagine glycosylation.

The protein belongs to the RNase T2 family.

The protein localises to the vacuole lumen. Its subcellular location is the cytoplasm. The catalysed reaction is a ribonucleotidyl-ribonucleotide-RNA + H2O = a 3'-end 3'-phospho-ribonucleotide-RNA + a 5'-end dephospho-ribonucleoside-RNA + H(+). In terms of biological role, rnase which modulates cell survival under stress conditions. Released from the vacuole to the cytoplasm during stress to promote tRNA and rRNA cleavage and to activate separately a downstream pathway that promotes cell death. Involved in cell size, vacuolar morphology and growth at high temperatures and high salt concentration. The sequence is that of Ribonuclease T2-like (rny1) from Aspergillus fumigatus (strain ATCC MYA-4609 / CBS 101355 / FGSC A1100 / Af293) (Neosartorya fumigata).